A 65-amino-acid polypeptide reads, in one-letter code: Small ribosomal subunit protein bS21 (65 aa).

A disordered region spans residues 44-65 (DDRLKRSRGKRRAQRANEERNS). A compositionally biased stretch (basic residues) spans 48 to 57 (KRSRGKRRAQ).

The protein belongs to the bacterial ribosomal protein bS21 family.

In Prosthecochloris aestuarii (strain DSM 271 / SK 413), this protein is Small ribosomal subunit protein bS21.